Reading from the N-terminus, the 554-residue chain is Phospho-2-dehydro-3-deoxyheptonate aldolase 1, chloroplastic (554 aa).

The transit peptide at 1–39 (MSLATSSSMAGGAAVVPRSATATTASAFVTMKRRATAVR) directs the protein to the chloroplast. The tract at residues 41-70 (VHAAEPSKNPPVGVPSAAKTSSPSVAAPEK) is disordered.

Belongs to the class-II DAHP synthase family.

The protein resides in the plastid. It localises to the chloroplast. The enzyme catalyses D-erythrose 4-phosphate + phosphoenolpyruvate + H2O = 7-phospho-2-dehydro-3-deoxy-D-arabino-heptonate + phosphate. It participates in metabolic intermediate biosynthesis; chorismate biosynthesis; chorismate from D-erythrose 4-phosphate and phosphoenolpyruvate: step 1/7. The sequence is that of Phospho-2-dehydro-3-deoxyheptonate aldolase 1, chloroplastic (DAHPS1) from Oryza sativa subsp. japonica (Rice).